Here is a 482-residue protein sequence, read N- to C-terminus: Glycogen synthase (482 aa).

Lys20 serves as a coordination point for ADP-alpha-D-glucose.

It belongs to the glycosyltransferase 1 family. Bacterial/plant glycogen synthase subfamily.

The catalysed reaction is [(1-&gt;4)-alpha-D-glucosyl](n) + ADP-alpha-D-glucose = [(1-&gt;4)-alpha-D-glucosyl](n+1) + ADP + H(+). Its pathway is glycan biosynthesis; glycogen biosynthesis. Functionally, synthesizes alpha-1,4-glucan chains using ADP-glucose. In Aliivibrio salmonicida (strain LFI1238) (Vibrio salmonicida (strain LFI1238)), this protein is Glycogen synthase.